Here is a 528-residue protein sequence, read N- to C-terminus: Tubulin-specific chaperone E (528 aa).

The CAP-Gly domain maps to 27-71 (GLVPPVAGLWLGVEWDNPERGKHDGSHEGTVYFKCRHPTAGSFIR). 7 LRR repeats span residues 152-176 (CPNI…DIAD), 178-206 (LKHL…TFPT), 207-229 (LKVL…ASGW), 231-253 (VLEK…DVLQ), 254-274 (TVKL…LFLI), 279-300 (RLEQ…DAGI), and 309-330 (SLQY…NELD). Residues 343 to 385 (NPLTEGSKDAQTTRQFIIARIGQLRTLNKCAIEPEERRGAELD) enclose the LRRCT domain. Lys-464 carries the post-translational modification N6-acetyllysine. Ser-496 carries the phosphoserine modification.

This sequence belongs to the TBCE family. As to quaternary structure, supercomplex made of cofactors A to E. Cofactors A and D function by capturing and stabilizing tubulin in a quasi-native conformation. Cofactor E binds to the cofactor D-tubulin complex; interaction with cofactor C then causes the release of tubulin polypeptides that are committed to the native state. Cofactors B and E can form a heterodimer which binds to alpha-tubulin and enhances their ability to dissociate tubulin heterodimers. Interacts with TBCD.

Its subcellular location is the cytoplasm. It is found in the cytoskeleton. Functionally, tubulin-folding protein; involved in the second step of the tubulin folding pathway and in the regulation of tubulin heterodimer dissociation. Required for correct organization of microtubule cytoskeleton and mitotic splindle, and maintenance of the neuronal microtubule network. This chain is Tubulin-specific chaperone E (TBCE), found in Bos taurus (Bovine).